We begin with the raw amino-acid sequence, 150 residues long: Cytochrome c-type biogenesis protein CcmE (150 aa).

The Cytoplasmic portion of the chain corresponds to 1–7 (MTRKQKR). Residues 8 to 28 (LAIIGGGVGFLTAAVLLVMFA) form a helical; Signal-anchor for type II membrane protein membrane-spanning segment. Residues 29–150 (FSQAVAYFYV…VTLGGKENIQ (122 aa)) lie on the Periplasmic side of the membrane. 2 residues coordinate heme: histidine 123 and tyrosine 127.

It belongs to the CcmE/CycJ family.

The protein resides in the cell inner membrane. Functionally, heme chaperone required for the biogenesis of c-type cytochromes. Transiently binds heme delivered by CcmC and transfers the heme to apo-cytochromes in a process facilitated by CcmF and CcmH. This Sinorhizobium fredii (strain NBRC 101917 / NGR234) protein is Cytochrome c-type biogenesis protein CcmE.